Reading from the N-terminus, the 308-residue chain is Glutaminase 1 (308 aa).

Serine 64, asparagine 116, glutamate 161, asparagine 168, tyrosine 192, tyrosine 244, and valine 262 together coordinate substrate.

This sequence belongs to the glutaminase family. Homotetramer.

It carries out the reaction L-glutamine + H2O = L-glutamate + NH4(+). The chain is Glutaminase 1 from Halalkalibacterium halodurans (strain ATCC BAA-125 / DSM 18197 / FERM 7344 / JCM 9153 / C-125) (Bacillus halodurans).